The following is a 373-amino-acid chain: Protein SENSITIVE TO PROTON RHIZOTOXICITY 2 (373 aa).

C2H2-type zinc fingers lie at residues 217–239 and 327–362; these read HYCQICGKGFKRDANLRMHMRAH and KHCGDIKWVCSCGTKFSRKDKLMSHVSLFLGHVPAH.

In terms of tissue distribution, expressed at low levels in roots (e.g. root tips and lateral roots), leaves (e.g. at the edge of mature leaves, possibly in hydathodes, and in vascular bundles), flowers (e.g. floral filaments), stems, siliques and cotyledons.

The protein resides in the nucleus. Probable transcription factor. Together with STOP1, plays a critical role in tolerance to major stress factors in acid soils such as proton H(+) and aluminum ion Al(3+). Required for the expression of genes in response to acidic stress (e.g. ALMT1 and MATE), and Al-activated citrate exudation. This Arabidopsis thaliana (Mouse-ear cress) protein is Protein SENSITIVE TO PROTON RHIZOTOXICITY 2.